The following is a 404-amino-acid chain: Argininosuccinate synthase (404 aa).

15–23 (AYSGGLDTS) provides a ligand contact to ATP. Y94 is a binding site for L-citrulline. G124 provides a ligand contact to ATP. L-aspartate-binding residues include T126, N130, and D131. Residue N130 participates in L-citrulline binding. Positions 134, 182, 266, and 278 each coordinate L-citrulline.

The protein belongs to the argininosuccinate synthase family. Type 1 subfamily. Homotetramer.

It is found in the cytoplasm. It carries out the reaction L-citrulline + L-aspartate + ATP = 2-(N(omega)-L-arginino)succinate + AMP + diphosphate + H(+). It participates in amino-acid biosynthesis; L-arginine biosynthesis; L-arginine from L-ornithine and carbamoyl phosphate: step 2/3. This is Argininosuccinate synthase from Streptomyces avermitilis (strain ATCC 31267 / DSM 46492 / JCM 5070 / NBRC 14893 / NCIMB 12804 / NRRL 8165 / MA-4680).